A 185-amino-acid chain; its full sequence is Neuronal vesicle trafficking-associated protein 1 (185 aa).

At 1–82 the chain is on the cytoplasmic side; the sequence is MVKLGNNFSE…ITEGVSERFK (82 aa). The chain crosses the membrane as a helical; Signal-anchor for type II membrane protein span at residues 83 to 103; that stretch reads VTVLVLFALAFLTCVVFLVVY. Topologically, residues 104–185 are lumenal; that stretch reads KVYKYDHTCP…QETEAAEKSA (82 aa).

It belongs to the NSG family.

The protein localises to the membrane. It localises to the golgi apparatus. The protein resides in the trans-Golgi network membrane. Its subcellular location is the endosome membrane. It is found in the cell projection. The protein localises to the dendrite. It localises to the early endosome membrane. The protein resides in the late endosome membrane. Its subcellular location is the lysosome lumen. It is found in the recycling endosome membrane. The protein localises to the cytoplasmic vesicle membrane. It localises to the golgi stack membrane. The protein resides in the endosome. Its subcellular location is the multivesicular body membrane. Functionally, plays a role in the recycling mechanism in neurons of multiple receptors and acts at the level of early endosomes to promote sorting of receptors toward a recycling pathway. In Gallus gallus (Chicken), this protein is Neuronal vesicle trafficking-associated protein 1.